The primary structure comprises 843 residues: Protein piwi (843 aa).

Residues 1–12 (MADDQGRGRRRP) carry the Nuclear localization signal motif. A disordered region spans residues 1–76 (MADDQGRGRR…TERKPWGDQY (76 aa)). The interval 1 to 257 (MADDQGRGRR…ILLGTEITHK (257 aa)) is interaction with CBX5 and papi. A symmetric dimethylarginine mark is found at R7, R9, R10, and R11. Residues 41-72 (PRADPRIEASRERRALEEAPRREGGPTERKPW) are compositionally biased toward basic and acidic residues. The PAZ domain occupies 263 to 372 (TIYDIMRRCS…LIPELCRVTG (110 aa)). Residues 538 to 829 (LILCLVPNDN…LATLVGTNLH (292 aa)) enclose the Piwi domain. Q589 contributes to the Mg(2+) binding site. Catalysis depends on residues D614 and D685. L843 contacts Mg(2+).

This sequence belongs to the argonaute family. Piwi subfamily. In the ovaries, part of a complex composed of at least Panx, nxf2, piwi and Nxt1. The complex is knowns as Panx-induced co-transcriptional silencing (PICTS) complex, Panx-nxf2-dependent TAP/p15 silencing (Pandas complex), SFiNX (silencing factor interacting nuclear export variant) or piwi-Panx-nxf2-p15 (PPNP) complex. Interacts with vas; this interaction is RNA-independent. Interacts with Dcr-1 and Fmr1; these interactions occur in polar granules. Interacts (via N-terminal region) with CBX5 (via chromoshadow domain). Forms a complex with Hsp83 and Hop; probably Hop mediates the interaction between piwi and Hsp83. Forms a complex with Yb body components armi and fs(1)Yb; this interaction is required for proper piRNA loading and nuclear localization of piwi. Interaction of Piwi and fs(1)Yb is likely to occur via armi. Interacts (via the N-terminal region when unmethylated or symmetrically methylated at Arg-10) with papi (via Tudor domain). Interacts with vret. Interacts with Panx. Interacts with arx. Interacts with Tudor-SN. Interacts with Nup358 (via N-terminus). Associates with the nuclear pore complex via interaction with Elys. Interacts with thoc5; the interaction might be partly RNA-mediated. Interacts with xmas-2. Symmetrically dimethylated, most likely by csul. Methylation at Arg-10 enhances binding to papi whereas methylation at Arg-7, Arg-9 or Arg-11 reduces binding affinity to papi. In terms of processing, phosphorylated on serine and tyrosine residues in an Hsp83-dependent manner. In terms of tissue distribution, expressed in ovaries (at protein level). Expressed somatically in ovariole terminal filament cells, epithelial sheath cells, cap cells and follicle cells (at protein level). Expressed in nurse cells and oocytes in developing egg chambers (at protein level). In embryos, accumulates in pole cells (at protein level). In larval and adult testis, expressed in a germinal proliferative center at the apical tip containing somatic hub cells and mitotically dividing germ stem cells (at protein level).

The protein localises to the cytoplasm. It localises to the nucleus. It is found in the nucleoplasm. Its subcellular location is the chromosome. Its function is as follows. Acts via the piwi-interacting RNA (piRNA) metabolic process, which mediates the repression of transposable elements during meiosis by forming complexes composed of piRNAs and Piwi proteins and governs the methylation and subsequent repression of transposons. Directly binds piRNAs, a class of 24 to 30 nucleotide RNAs that are generated by a Dicer-independent mechanism and are primarily derived from transposons and other repeated sequence elements. In ovarian somatic cells, mediates silencing of transposable elements at the transcriptional level in a mael-dependent manner. Involved in silencing of long terminal repeat (LTR) retrotransposons in male germline. In testis, regulates spermatogenesis together with Tudor-SN. In germ cells, mediates silencing at both transcriptional and post-transcriptional levels and is involved in the maintenance of populations of primary and secondary piRNAs. Piwi-mediated transcriptional silencing is accompanied by the formation of His3 trimethylated on 'Lys-10' (H3K9me3) associated euchromatin and heterochromatin. In ovary, associates predominantly with antisense piRNAs that contain uridine at their 5' end. Association with sense piRNAs is also observed but to a lesser extent. Mediates a somatic signaling mechanism required for the maintenance of germline stem cells to produce and maintain a daughter germline stem cell. It is not essential for the further differentiation of the committed daughter cell. Acts cell autonomously to promote germline stem cell division. Its role in stem cell maintenance does not seem to require nuclear localization. Required maternally for the posterior localization of osk and vas and for pole cell formation during oogenesis and early embryogenesis. Together with Hop and Hsp83, mediates canalization, also known as developmental robustness, likely via epigenetic silencing of existing genetic variants and suppression of transposon-induced new genetic variation. Shows RNA cleavage activity, although is not required for any of its known functions. In the ovaries, forms a complex with nxf2, Panx and Nxt1 which acts as effectors of cotranscriptional transposon silencing. The sequence is that of Protein piwi from Drosophila melanogaster (Fruit fly).